A 318-amino-acid polypeptide reads, in one-letter code: Taste receptor type 2 member 60 (318 aa).

The Extracellular segment spans residues 1-7 (MNGDHMV). The chain crosses the membrane as a helical span at residues 8-28 (LGSSVTDKKAIILVTILLLLR). Residues 29 to 40 (LVAIAGNGFITA) lie on the Cytoplasmic side of the membrane. The chain crosses the membrane as a helical span at residues 41 to 61 (ALGVEWVLRRMLLPCDKLLVS). At 62–88 (LGASHFCLQSVVMGKTIYVFLYPMAFP) the chain is on the extracellular side. A helical transmembrane segment spans residues 89 to 109 (YNPVLQFLAFQWDFLNAATLW). Topologically, residues 110–128 (FSTWLSVFYCVKIATFTHP) are cytoplasmic. The helical transmembrane segment at 129-149 (VFFWLKHKLSGWLPWMVFSYV) threads the bilayer. Residues 150–183 (GLSSFTTILFFIGNHRMYQNYLKNHLQPWNVTGN) lie on the Extracellular side of the membrane. N-linked (GlcNAc...) asparagine glycosylation occurs at Asn179. Residues 184–204 (SIRSYCEKFYLFPLKMITWTM) form a helical membrane-spanning segment. Residues 205–234 (PTAVFFICMILLITSLGRHMKKALLTTSGF) are Cytoplasmic-facing. The chain crosses the membrane as a helical span at residues 235-255 (REPSVQAHIKALLALLSFAML). At 256–264 (FISYFLSLV) the chain is on the extracellular side. A helical transmembrane segment spans residues 265 to 285 (FSAAGIFPPLDFKFWVWESVI). The Cytoplasmic portion of the chain corresponds to 286–318 (YLCAAVHPIILLFSNCRLRAVLKSRRSSRCGTP).

It belongs to the G-protein coupled receptor T2R family.

It localises to the membrane. In terms of biological role, receptor that may play a role in the perception of bitterness and is gustducin-linked. May play a role in sensing the chemical composition of the gastrointestinal content. The activity of this receptor may stimulate alpha gustducin, mediate PLC-beta-2 activation and lead to the gating of TRPM5. In Pan troglodytes (Chimpanzee), this protein is Taste receptor type 2 member 60 (TAS2R60).